Reading from the N-terminus, the 562-residue chain is NAD-dependent malic enzyme (562 aa).

The Proton donor role is filled by Y101. Residue R154 coordinates NAD(+). K172 acts as the Proton acceptor in catalysis. Residues E243, D244, and D267 each coordinate a divalent metal cation. NAD(+) is bound by residues D267 and N415.

This sequence belongs to the malic enzymes family. As to quaternary structure, homotetramer. Mg(2+) is required as a cofactor. The cofactor is Mn(2+).

It carries out the reaction (S)-malate + NAD(+) = pyruvate + CO2 + NADH. The enzyme catalyses oxaloacetate + H(+) = pyruvate + CO2. The protein is NAD-dependent malic enzyme of Shewanella oneidensis (strain ATCC 700550 / JCM 31522 / CIP 106686 / LMG 19005 / NCIMB 14063 / MR-1).